Consider the following 979-residue polypeptide: Chromosome partition protein Smc (979 aa).

33–40 (PNGSGKSN) lines the ATP pocket. Positions 169–400 (SKYKLDKEEA…INILKQQFEN (232 aa)) form a coiled coil. The region spanning 419–538 (DGYIGLASEL…DNVDNANRIA (120 aa)) is the SMC hinge domain. Coiled-coil stretches lie at residues 572 to 716 (ILNY…HSDS) and 750 to 818 (SLDL…DKII).

Belongs to the SMC family. In terms of assembly, homodimer.

The protein localises to the cytoplasm. Required for chromosome condensation and partitioning. The protein is Chromosome partition protein Smc of Mesomycoplasma hyorhinis (Mycoplasma hyorhinis).